A 194-amino-acid polypeptide reads, in one-letter code: Phosphoheptose isomerase (194 aa).

An SIS domain is found at 37–194 (ISNSFKQGGK…LIEFEMAKQA (158 aa)). 52-54 (NGG) contributes to the substrate binding site. Positions 61 and 65 each coordinate Zn(2+). Substrate is bound by residues E65, 93–94 (ND), 119–121 (STS), S124, and Q172. Q172 and H180 together coordinate Zn(2+).

It belongs to the SIS family. GmhA subfamily. In terms of assembly, homotetramer. Zn(2+) is required as a cofactor.

It is found in the cytoplasm. The catalysed reaction is 2 D-sedoheptulose 7-phosphate = D-glycero-alpha-D-manno-heptose 7-phosphate + D-glycero-beta-D-manno-heptose 7-phosphate. It participates in carbohydrate biosynthesis; D-glycero-D-manno-heptose 7-phosphate biosynthesis; D-glycero-alpha-D-manno-heptose 7-phosphate and D-glycero-beta-D-manno-heptose 7-phosphate from sedoheptulose 7-phosphate: step 1/1. The protein operates within bacterial outer membrane biogenesis; LOS core biosynthesis. Catalyzes the isomerization of sedoheptulose 7-phosphate in D-glycero-D-manno-heptose 7-phosphate. In Haemophilus influenzae (strain ATCC 51907 / DSM 11121 / KW20 / Rd), this protein is Phosphoheptose isomerase.